The primary structure comprises 217 residues: UPF0502 protein PFLU_2135 (217 aa).

It belongs to the UPF0502 family.

In Pseudomonas fluorescens (strain SBW25), this protein is UPF0502 protein PFLU_2135.